We begin with the raw amino-acid sequence, 543 residues long: MAVITEHGGTTSSPPENNNSIGNGKHRVNGHQLSTSLTIPEFFAHKNIFVTGGTGFLGTVLIEALLDTHPDIGTIYVLVRGKRKFDPNERIRRLLQKPIFEKYSEKTLSKVVPVVGELSEPNFGFGPELLQELIDRVNVIYHSAATIKFSSPLRTAIRTNLTGTMRTIELAKQLKQLAAYIYCSTAFCNSNNRGLIAEEVYKSQFDPYEMMKMAEDDSAWEDFTDQKCKGYIRDHPNTYTFTKNLSENLLMAEMSGLPAAIVRPSIVYGTLEHPMKGWVGNANSGHLGFLAGFVKGIFRTMCGNANAVIDIIPCDYVINSSLVMGWYVGTRKLEQPEIIHCTSGEVNPLNLAEFCTIINDSVERHPPNSFVWKPVTKLRNGWRYNLFFYLFHLLPAMVFIIPEKLFGIGMPQHTAYEYMRVFQKGTKAFDYFLDKDFRYSLKNALRISALIPESDRRRYNFDASQCDWSEFIDRCLIGIRRFYFKESAVTTDWHRNYWKVFNVLYYAGYVVIFAVLYFALTLTLGLQIGLTLAVLIWGFLVWL.

Residues 1-29 (MAVITEHGGTTSSPPENNNSIGNGKHRVN) are disordered. Over residues 8–22 (GGTTSSPPENNNSIG) the composition is skewed to polar residues. The next 3 helical transmembrane spans lie at 386–406 (LFFY…EKLF), 500–520 (VFNV…YFAL), and 522–542 (LTLG…FLVW).

It belongs to the fatty acyl-CoA reductase family.

The protein localises to the membrane. The catalysed reaction is a long-chain fatty acyl-CoA + 2 NADPH + 2 H(+) = a long-chain primary fatty alcohol + 2 NADP(+) + CoA. It carries out the reaction hexadecanoyl-CoA + 2 NADPH + 2 H(+) = hexadecan-1-ol + 2 NADP(+) + CoA. It catalyses the reaction octadecanoyl-CoA + 2 NADPH + 2 H(+) = octadecan-1-ol + 2 NADP(+) + CoA. Its function is as follows. Catalyzes the reduction of C16 or C18 fatty acyl-CoA to fatty alcohols. The polypeptide is Putative fatty acyl-CoA reductase CG8303 (Drosophila melanogaster (Fruit fly)).